Consider the following 166-residue polypeptide: Putative transmembrane protein encoded by LINC00477 (166 aa).

A glycan (N-linked (GlcNAc...) asparagine) is linked at N7. The next 3 helical transmembrane spans lie at 15–35 (VSSF…FFLC), 41–61 (MTGC…VLGP), and 63–83 (PMGM…RFLG). Residues 127 to 166 (LPVPHPPSPLSKCPQHPRPRRTKGPGLRKLWGPGPPFFPS) form a disordered region.

It localises to the membrane. The protein is Putative transmembrane protein encoded by LINC00477 (LINC00477) of Homo sapiens (Human).